Reading from the N-terminus, the 120-residue chain is Late cornified envelope-like proline-rich protein 1 (120 aa).

This sequence belongs to the cornifin (SPRR) family.

The protein is Late cornified envelope-like proline-rich protein 1 (Lelp1) of Mus musculus (Mouse).